A 502-amino-acid polypeptide reads, in one-letter code: Glycerol kinase (502 aa).

ADP is bound at residue threonine 14. ATP contacts are provided by threonine 14, threonine 15, and serine 16. Threonine 14 provides a ligand contact to sn-glycerol 3-phosphate. Arginine 18 lines the ADP pocket. 4 residues coordinate sn-glycerol 3-phosphate: arginine 84, glutamate 85, tyrosine 137, and aspartate 247. Positions 84, 85, 137, 247, and 248 each coordinate glycerol. 2 residues coordinate ADP: threonine 269 and glycine 312. ATP is bound by residues threonine 269, glycine 312, glutamine 316, and glycine 413. Positions 413 and 417 each coordinate ADP.

It belongs to the FGGY kinase family. As to quaternary structure, homotetramer and homodimer (in equilibrium). Heterodimer with EIIA-Glc. Binds 1 zinc ion per glycerol kinase EIIA-Glc dimer. The zinc ion is important for dimerization.

It carries out the reaction glycerol + ATP = sn-glycerol 3-phosphate + ADP + H(+). Its pathway is polyol metabolism; glycerol degradation via glycerol kinase pathway; sn-glycerol 3-phosphate from glycerol: step 1/1. Its activity is regulated as follows. Activity of this regulatory enzyme is affected by several metabolites. Allosterically and non-competitively inhibited by fructose 1,6-bisphosphate (FBP) and unphosphorylated phosphocarrier protein EIIA-Glc (III-Glc), an integral component of the bacterial phosphotransferase (PTS) system. In terms of biological role, key enzyme in the regulation of glycerol uptake and metabolism. Catalyzes the phosphorylation of glycerol to yield sn-glycerol 3-phosphate. The chain is Glycerol kinase from Photorhabdus laumondii subsp. laumondii (strain DSM 15139 / CIP 105565 / TT01) (Photorhabdus luminescens subsp. laumondii).